The chain runs to 796 residues: Serine/threonine-protein kinase ATG1 (796 aa).

The region spanning 9–304 is the Protein kinase domain; it reads YVVGAEIGRG…FQEFFNDPVI (296 aa). ATP contacts are provided by residues 15–23 and Lys38; that span reads IGRGSFANV. Catalysis depends on Asp155, which acts as the Proton acceptor. Acidic residues predominate over residues 360–370; that stretch reads LEEEDEEEDQD. Disordered stretches follow at residues 360–382, 389–408, and 450–480; these read LEEEDEEEDQDQLPSKNDNIQHM, LLNKTTQKQTEVQSQPRREL, and PYTRRYSSSSRSSSTGSNQRRPSFGDRKVPI. Residues 389–403 are compositionally biased toward polar residues; the sequence is LLNKTTQKQTEVQSQ. A compositionally biased stretch (low complexity) spans 453-470; it reads RRYSSSSRSSSTGSNQRR.

This sequence belongs to the protein kinase superfamily. Ser/Thr protein kinase family. APG1/unc-51/ULK1 subfamily. Homodimer. Forms a ternary complex with ATG13 and ATG17.

It is found in the cytoplasm. The protein resides in the preautophagosomal structure membrane. The catalysed reaction is L-seryl-[protein] + ATP = O-phospho-L-seryl-[protein] + ADP + H(+). It carries out the reaction L-threonyl-[protein] + ATP = O-phospho-L-threonyl-[protein] + ADP + H(+). In terms of biological role, serine/threonine protein kinase involved in the cytoplasm to vacuole transport (Cvt) and found to be essential in autophagy, where it is required for the formation of autophagosomes. Involved in the clearance of protein aggregates which cannot be efficiently cleared by the proteasome. Required for selective autophagic degradation of the nucleus (nucleophagy) as well as for mitophagy which contributes to regulate mitochondrial quantity and quality by eliminating the mitochondria to a basal level to fulfill cellular energy requirements and preventing excess ROS production. Also involved in endoplasmic reticulum-specific autophagic process, in selective removal of ER-associated degradation (ERAD) substrates. Plays a key role in ATG9 and ATG23 cycling through the pre-autophagosomal structure and is necessary to promote ATG18 binding to ATG9 through phosphorylation of ATG9. Catalyzes phosphorylation of ATG4, decreasing the interaction between ATG4 and ATG8 and impairing deconjugation of PE-conjugated forms of ATG8. The chain is Serine/threonine-protein kinase ATG1 from Komagataella pastoris (Yeast).